The sequence spans 290 residues: Transposon Ty3-G Gag polyprotein (290 aa).

Ser2 is subject to N-acetylserine. Residues 265–282 (RLCFYCKKEGHRLNECRA) form a CCHC-type zinc finger.

It is found in the cytoplasm. Capsid protein (CA) is the structural component of the virus-like particle (VLP), forming the shell that encapsulates the retrotransposons dimeric RNA genome. Its function is as follows. Nucleocapsid protein p9 (NC) forms the nucleocore that coats the retro-elements dimeric RNA. Binds these RNAs through its zinc fingers. Promotes primer tRNA(i)-Met annealing to the multipartite primer-binding site (PBS), dimerization of Ty3 RNA and initiation of reverse transcription. The sequence is that of Transposon Ty3-G Gag polyprotein (TY3A-G) from Saccharomyces cerevisiae (strain ATCC 204508 / S288c) (Baker's yeast).